Here is an 824-residue protein sequence, read N- to C-terminus: Acyl-homoserine lactone acylase QuiP (824 aa).

A signal peptide spans 1-26 (MASPALRHFLPRFGAAAAAASFLSLA). Catalysis depends on serine 264, which acts as the Nucleophile.

This sequence belongs to the peptidase S45 family. As to quaternary structure, heterodimer of an alpha subunit and a beta subunit processed from the same precursor.

It localises to the periplasm. The catalysed reaction is an N-acyl-L-homoserine lactone + H2O = L-homoserine lactone + a carboxylate. In terms of biological role, catalyzes the deacylation of acyl-homoserine lactone (AHL or acyl-HSL), releasing homoserine lactone (HSL) and the corresponding fatty acid. Possesses a specificity for the degradation of long-chain acyl-HSLs (side chains of seven or more carbons in length). The polypeptide is Acyl-homoserine lactone acylase QuiP (quiP) (Pseudomonas syringae pv. syringae (strain B728a)).